A 514-amino-acid polypeptide reads, in one-letter code: Maturase K (514 aa).

This sequence belongs to the intron maturase 2 family. MatK subfamily.

The protein resides in the plastid. Its subcellular location is the chloroplast. Usually encoded in the trnK tRNA gene intron. Probably assists in splicing its own and other chloroplast group II introns. This Drosophyllum lusitanicum (Portuguese sundew) protein is Maturase K.